Consider the following 357-residue polypeptide: UDP-N-acetylglucosamine 2-epimerase homolog (357 aa).

Belongs to the UDP-N-acetylglucosamine 2-epimerase family.

The protein is UDP-N-acetylglucosamine 2-epimerase homolog of Methanococcus maripaludis (strain DSM 14266 / JCM 13030 / NBRC 101832 / S2 / LL).